Reading from the N-terminus, the 63-residue chain is Large ribosomal subunit protein bL28 (63 aa).

This sequence belongs to the bacterial ribosomal protein bL28 family.

In Desulfitobacterium hafniense (strain DSM 10664 / DCB-2), this protein is Large ribosomal subunit protein bL28.